A 440-amino-acid polypeptide reads, in one-letter code: Proline--tRNA ligase (440 aa).

This sequence belongs to the class-II aminoacyl-tRNA synthetase family. ProS type 2 subfamily. In terms of assembly, homodimer.

It is found in the cytoplasm. It catalyses the reaction tRNA(Pro) + L-proline + ATP = L-prolyl-tRNA(Pro) + AMP + diphosphate. In terms of biological role, catalyzes the attachment of proline to tRNA(Pro) in a two-step reaction: proline is first activated by ATP to form Pro-AMP and then transferred to the acceptor end of tRNA(Pro). The sequence is that of Proline--tRNA ligase from Rhizobium leguminosarum bv. trifolii (strain WSM2304).